Here is a 334-residue protein sequence, read N- to C-terminus: Probable 3-hydroxyisobutyrate dehydrogenase-like 1, mitochondrial (334 aa).

The N-terminal 23 residues, 1-23 (MPLLLRRFPSPSVVSSFFLRRSM), are a transit peptide targeting the mitochondrion. Ala24 is subject to N-acetylalanine. NAD(+)-binding positions include 38–67 (TKIG…TVFN) and Thr133. Lys207 is a catalytic residue. An NAD(+)-binding site is contributed by Lys275.

This sequence belongs to the HIBADH-related family. 3-hydroxyisobutyrate dehydrogenase subfamily.

It is found in the mitochondrion. It carries out the reaction 3-hydroxy-2-methylpropanoate + NAD(+) = 2-methyl-3-oxopropanoate + NADH + H(+). It functions in the pathway amino-acid degradation; L-valine degradation. The protein is Probable 3-hydroxyisobutyrate dehydrogenase-like 1, mitochondrial of Arabidopsis thaliana (Mouse-ear cress).